The primary structure comprises 150 residues: Large ribosomal subunit protein uL15 (150 aa).

A compositionally biased stretch (polar residues) spans 1–15 (MNLSNLQPAEGSTHN). The interval 1–53 (MNLSNLQPAEGSTHNQNKRVGRGEGSGKGGTAARGHKGAKSRSGYSKKIGFEG) is disordered. Residues 23-32 (GEGSGKGGTA) show a composition bias toward gly residues.

It belongs to the universal ribosomal protein uL15 family. In terms of assembly, part of the 50S ribosomal subunit.

In terms of biological role, binds to the 23S rRNA. The protein is Large ribosomal subunit protein uL15 of Flavobacterium johnsoniae (strain ATCC 17061 / DSM 2064 / JCM 8514 / BCRC 14874 / CCUG 350202 / NBRC 14942 / NCIMB 11054 / UW101) (Cytophaga johnsonae).